The chain runs to 682 residues: Protein asunder (682 aa).

Positions 517–570 (NGARLKLSKAKDQYRLLYRELEQLIHLNATTVHHKNLLESLQSLRAAYGEAKSE) form a coiled coil. A compositionally biased stretch (polar residues) spans 571–583 (PNSSLLRSYTESP). Residues 571 to 612 (PNSSLLRSYTESPHSPERLEPIPSGGSSGSNSNSLLKASKRR) form a disordered region. Positions 606–612 (LKASKRR) match the Nuclear localization signal (NLS) motif.

The protein belongs to the Integrator subunit 13 family. As to quaternary structure, belongs to the multiprotein complex Integrator, at least composed of IntS1, IntS2, IntS3, IntS4, omd/IntS5, IntS6, defl/IntS7, IntS8, IntS9, IntS10, IntS11, IntS12, asun/IntS13, IntS14 and IntS15. The core complex associates with protein phosphatase 2A subunits mts/PP2A and Pp2A-29B, to form the Integrator-PP2A (INTAC) complex. Post-translationally, phosphorylated.

Its subcellular location is the nucleus. It localises to the cytoplasm. The protein resides in the perinuclear region. Functionally, component of the integrator complex, a multiprotein complex that terminates RNA polymerase II (Pol II) transcription in the promoter-proximal region of genes. The integrator complex provides a quality checkpoint during transcription elongation by driving premature transcription termination of transcripts that are unfavorably configured for transcriptional elongation: the complex terminates transcription by (1) catalyzing dephosphorylation of the C-terminal domain (CTD) of Pol II subunit Polr2A/Rbp1 and Spt5, and (2) degrading the exiting nascent RNA transcript via endonuclease activity. The integrator complex is also involved in the 3'-end processing of the U7 snRNA, and also the spliceosomal snRNAs U1, U2, U4 and U5. This Drosophila ananassae (Fruit fly) protein is Protein asunder (asun).